A 319-amino-acid polypeptide reads, in one-letter code: Ankyrin repeat domain-containing protein 1 (319 aa).

Positions 61–89 (KTEKQREAELKKKKLEQRSKLENLEDLEI) form a coiled coil. ANK repeat units follow at residues 152 to 181 (YKRTALHRACLEGHLAIVEKLIEAGAQIEF), 185 to 214 (LESTAIHWASRGGSLDVLKLLLNKGAKISA), 218 to 247 (LLSTPLHVAVRTGHYECAEHLIACEADLNA), 251 to 280 (EGDTPLHDAVRLNRYKMIRLLITYGADLNV), and 284 to 315 (AGKTPMDLVLHWQNGTKAIFDSLKENSYKASR).

Interacts with TTN/titin and YBX1.

It is found in the nucleus. May play an important role in endothelial cell activation. May act as a nuclear transcription factor that negatively regulates the expression of cardiac genes. The polypeptide is Ankyrin repeat domain-containing protein 1 (ANKRD1) (Bos taurus (Bovine)).